A 393-amino-acid polypeptide reads, in one-letter code: Sex hormone-binding globulin (393 aa).

Residues 1 to 27 (MEGRGPLATSPRRRWLLLLLLLPHSHQ) form the signal peptide. 2 consecutive Laminin G-like domains span residues 35 to 208 (VHLS…PRSC) and 215 to 381 (GSFF…THSC). Cystine bridges form between Cys-183-Cys-208 and Cys-353-Cys-381. N-linked (GlcNAc...) asparagine glycans are attached at residues Asn-371 and Asn-387.

Homodimer.

It is found in the secreted. Its function is as follows. Functions as an androgen transport protein, but may also be involved in receptor mediated processes. Each dimer binds one molecule of steroid. Specific for 5-alpha-dihydrotestosterone, testosterone, and 17-beta-estradiol. Regulates the plasma metabolic clearance rate of steroid hormones by controlling their plasma concentration. This Crocuta crocuta (Spotted hyena) protein is Sex hormone-binding globulin (SHBG).